The following is a 201-amino-acid chain: ATP-dependent Clp protease proteolytic subunit (201 aa).

Residue S101 is the Nucleophile of the active site. H126 is an active-site residue.

Belongs to the peptidase S14 family. As to quaternary structure, component of the chloroplastic Clp protease core complex.

Its subcellular location is the plastid. It localises to the chloroplast stroma. The enzyme catalyses Hydrolysis of proteins to small peptides in the presence of ATP and magnesium. alpha-casein is the usual test substrate. In the absence of ATP, only oligopeptides shorter than five residues are hydrolyzed (such as succinyl-Leu-Tyr-|-NHMec, and Leu-Tyr-Leu-|-Tyr-Trp, in which cleavage of the -Tyr-|-Leu- and -Tyr-|-Trp bonds also occurs).. In terms of biological role, cleaves peptides in various proteins in a process that requires ATP hydrolysis. Has a chymotrypsin-like activity. Plays a major role in the degradation of misfolded proteins. This chain is ATP-dependent Clp protease proteolytic subunit, found in Chaetosphaeridium globosum (Charophycean green alga).